A 150-amino-acid chain; its full sequence is Small ribosomal subunit protein uS15 (150 aa).

Residues 1–22 form a disordered region; the sequence is MNKRREKGQSHSTRPPHPQPPQ.

It belongs to the universal ribosomal protein uS15 family. As to quaternary structure, part of the 30S ribosomal subunit.

The sequence is that of Small ribosomal subunit protein uS15 from Aeropyrum pernix (strain ATCC 700893 / DSM 11879 / JCM 9820 / NBRC 100138 / K1).